The chain runs to 443 residues: Glucose-6-phosphate isomerase (443 aa).

Residue Glu-285 is the Proton donor of the active site. Residues His-306 and Lys-420 contribute to the active site.

It belongs to the GPI family.

It localises to the cytoplasm. The enzyme catalyses alpha-D-glucose 6-phosphate = beta-D-fructose 6-phosphate. It functions in the pathway carbohydrate biosynthesis; gluconeogenesis. Its pathway is carbohydrate degradation; glycolysis; D-glyceraldehyde 3-phosphate and glycerone phosphate from D-glucose: step 2/4. Functionally, catalyzes the reversible isomerization of glucose-6-phosphate to fructose-6-phosphate. The chain is Glucose-6-phosphate isomerase from Staphylococcus aureus (strain USA300).